We begin with the raw amino-acid sequence, 204 residues long: Probable molybdenum cofactor guanylyltransferase (204 aa).

Residues 10-12 (LSG), K22, D75, and D104 each bind GTP. D104 lines the Mg(2+) pocket.

The protein belongs to the MobA family. It depends on Mg(2+) as a cofactor.

It is found in the cytoplasm. The catalysed reaction is Mo-molybdopterin + GTP + H(+) = Mo-molybdopterin guanine dinucleotide + diphosphate. Transfers a GMP moiety from GTP to Mo-molybdopterin (Mo-MPT) cofactor (Moco or molybdenum cofactor) to form Mo-molybdopterin guanine dinucleotide (Mo-MGD) cofactor. This chain is Probable molybdenum cofactor guanylyltransferase, found in Methanocaldococcus jannaschii (strain ATCC 43067 / DSM 2661 / JAL-1 / JCM 10045 / NBRC 100440) (Methanococcus jannaschii).